The sequence spans 61 residues: Small ribosomal subunit protein uS14 (61 aa).

Zn(2+) contacts are provided by Cys-24, Cys-27, Cys-40, and Cys-43.

It belongs to the universal ribosomal protein uS14 family. Zinc-binding uS14 subfamily. Part of the 30S ribosomal subunit. Contacts proteins S3 and S10. Zn(2+) serves as cofactor.

Binds 16S rRNA, required for the assembly of 30S particles and may also be responsible for determining the conformation of the 16S rRNA at the A site. The chain is Small ribosomal subunit protein uS14 from Syntrophotalea carbinolica (strain DSM 2380 / NBRC 103641 / GraBd1) (Pelobacter carbinolicus).